Consider the following 147-residue polypeptide: SPI-1 type 3 secretion system pilotin (147 aa).

The signal sequence occupies residues 1 to 15 (MKKFYSCLPVFLLIG). Cys16 carries the N-palmitoyl cysteine lipid modification. A lipid anchor (S-diacylglycerol cysteine) is attached at Cys16.

This sequence belongs to the InvH family.

It is found in the cell outer membrane. Involved in the synthesis of the type III secretion system (T3SS), also called injectisome, which is used to inject bacterial effector proteins into eukaryotic host cells. Pilot protein that is required for the proper localization of the secretin InvG/SctC in the outer membrane. Necessary for efficient adherence and entry of these organisms into cultured epithelial cells. The polypeptide is SPI-1 type 3 secretion system pilotin (Salmonella choleraesuis (strain SC-B67)).